A 182-amino-acid polypeptide reads, in one-letter code: Putative manganese efflux pump MntP (182 aa).

A run of 6 helical transmembrane segments spans residues 6 to 26 (LIPL…VSLG), 37 to 57 (ILYI…IGMV), 71 to 91 (HFAG…SSIL), 101 to 121 (IGIS…SVGL), 131 to 151 (IITI…GLFI), and 162 to 182 (YGEI…LFPI).

This sequence belongs to the MntP (TC 9.B.29) family.

The protein resides in the cell membrane. Probably functions as a manganese efflux pump. The sequence is that of Putative manganese efflux pump MntP from Bacillus thuringiensis subsp. konkukian (strain 97-27).